We begin with the raw amino-acid sequence, 78 residues long: DNA-directed RNA polymerase subunit omega (78 aa).

Belongs to the RNA polymerase subunit omega family. In cyanobacteria the RNAP catalytic core is composed of 2 alpha, 1 beta, 1 beta', 1 gamma and 1 omega subunit. When a sigma factor is associated with the core the holoenzyme is formed, which can initiate transcription.

The catalysed reaction is RNA(n) + a ribonucleoside 5'-triphosphate = RNA(n+1) + diphosphate. Its function is as follows. Promotes RNA polymerase assembly. Latches the N- and C-terminal regions of the beta' subunit thereby facilitating its interaction with the beta and alpha subunits. The protein is DNA-directed RNA polymerase subunit omega of Prochlorococcus marinus subsp. pastoris (strain CCMP1986 / NIES-2087 / MED4).